We begin with the raw amino-acid sequence, 84 residues long: UPF0298 protein NWMN_0985 (84 aa).

It belongs to the UPF0298 family.

Its subcellular location is the cytoplasm. This is UPF0298 protein NWMN_0985 from Staphylococcus aureus (strain Newman).